We begin with the raw amino-acid sequence, 738 residues long: Exocyst complex component 3 (738 aa).

A coiled-coil region spans residues 28 to 91 (LEKVEQYRHR…DEVERLLRGV (64 aa)).

Belongs to the SEC6 family. As to quaternary structure, the exocyst complex is composed of Sec3/Exoc1, Sec5/Exoc2, Sec6/Exoc3, Sec8/Exoc4, Sec10/Exoc5, Sec15/Exoc6, Exo70/Exoc7 and Exo84/Exoc8.

Component of the exocyst complex involved in the docking of exocytic vesicles with fusion sites on the plasma membrane. The polypeptide is Exocyst complex component 3 (Drosophila melanogaster (Fruit fly)).